The chain runs to 882 residues: Protein O-mannosyl-transferase TMTC1 (882 aa).

At 1-20 (MVVTTSARGGGGDRTPSRRR) the chain is on the cytoplasmic side. Residues 1 to 20 (MVVTTSARGGGGDRTPSRRR) are disordered. Residues 21-41 (GCGLAPAGAAALLAGASCLCY) form a helical membrane-spanning segment. Topologically, residues 42–110 (GRSLQGEFVH…KLNIFLTGMN (69 aa)) are extracellular. The N-linked (GlcNAc...) asparagine glycan is linked to Asn86. Residues 111-131 (PFYFHAVNIILHCLVTLVLMY) form a helical membrane-spanning segment. Over 132 to 137 (TCDKTV) the chain is Cytoplasmic. Residues 138-157 (FKNRGLAFVTALLFAVHPIH) traverse the membrane as a helical segment. At 158-160 (TEA) the chain is on the extracellular side. A helical membrane pass occupies residues 161–181 (VAGIVGRADVLACLLFLLAFL). The Cytoplasmic segment spans residues 182–197 (SYNRSLDQGCVGGSFP). Residues 198–218 (STVSPFFLLLSLFLGTCAMLV) form a helical membrane-spanning segment. The Extracellular portion of the chain corresponds to 219-221 (KET). Residues 222 to 238 (GITVFGVCLVYDLFSLS) form a helical membrane-spanning segment. The Cytoplasmic segment spans residues 239–313 (NKQDKSSNGA…SPRAVWSMMR (75 aa)). The interval 246–277 (NGALCPRSPQQPGSPQPSSLPGHPHRENGKQQ) is disordered. Low complexity predominate over residues 251–267 (PRSPQQPGSPQPSSLPG). The chain crosses the membrane as a helical span at residues 314–334 (FLTYSYLLAFNVWLLLAPVTL). At 335–354 (CYDWQVGSIPLVETIWDMRN) the chain is on the extracellular side. A helical membrane pass occupies residues 355 to 375 (LATIFLAVVMALLSLHCLAAF). Residues 376–381 (KRLEHK) are Cytoplasmic-facing. The helical transmembrane segment at 382 to 402 (EVLVGLLFLVFPFIPASNLFF) threads the bilayer. A topological domain (extracellular) is located at residue Arg403. Residues 404 to 424 (VGFVVAERVLYMPSMGYCILF) traverse the membrane as a helical segment. The Cytoplasmic segment spans residues 425–438 (VHGLSKLCTWLNRC). The helical transmembrane segment at 439-459 (GATTLIVSTVLLLLLFSWKTV) threads the bilayer. Residues 460–882 (KQNEIWLSRE…LQEVREKDQT (423 aa)) are Extracellular-facing. TPR repeat units lie at residues 483-516 (AKVH…YPRH), 517-547 (ASAL…HPQH), 548-581 (NRAL…GPEF), 582-615 (ADAY…CPDS), 616-649 (SDLH…SPSH), 650-682 (HVAM…VAHK), 683-716 (AEIL…QPSQ), 751-784 (LECY…KPKD), 789-822 (SELF…NPDQ), and 823-856 (AQAW…VPDS).

This sequence belongs to the TMTC family. In terms of assembly, may interact with FAM168B.

It localises to the membrane. It is found in the endoplasmic reticulum. It catalyses the reaction a di-trans,poly-cis-dolichyl beta-D-mannosyl phosphate + L-seryl-[protein] = 3-O-(alpha-D-mannosyl)-L-seryl-[protein] + a di-trans,poly-cis-dolichyl phosphate + H(+). The catalysed reaction is a di-trans,poly-cis-dolichyl beta-D-mannosyl phosphate + L-threonyl-[protein] = 3-O-(alpha-D-mannosyl)-L-threonyl-[protein] + a di-trans,poly-cis-dolichyl phosphate + H(+). It participates in protein modification; protein glycosylation. Functionally, transfers mannosyl residues to the hydroxyl group of serine or threonine residues. The 4 members of the TMTC family are O-mannosyl-transferases dedicated primarily to the cadherin superfamily, each member seems to have a distinct role in decorating the cadherin domains with O-linked mannose glycans at specific regions. Also acts as O-mannosyl-transferase on other proteins such as PDIA3. The chain is Protein O-mannosyl-transferase TMTC1 from Homo sapiens (Human).